The sequence spans 430 residues: Enolase (430 aa).

Residue Q167 participates in (2R)-2-phosphoglycerate binding. E209 functions as the Proton donor in the catalytic mechanism. Mg(2+)-binding residues include D246, E287, and D314. (2R)-2-phosphoglycerate contacts are provided by K339, R368, S369, and K390. The Proton acceptor role is filled by K339.

The protein belongs to the enolase family. Mg(2+) serves as cofactor.

Its subcellular location is the cytoplasm. It is found in the secreted. It localises to the cell surface. The enzyme catalyses (2R)-2-phosphoglycerate = phosphoenolpyruvate + H2O. It participates in carbohydrate degradation; glycolysis; pyruvate from D-glyceraldehyde 3-phosphate: step 4/5. Functionally, catalyzes the reversible conversion of 2-phosphoglycerate (2-PG) into phosphoenolpyruvate (PEP). It is essential for the degradation of carbohydrates via glycolysis. The polypeptide is Enolase (Prochlorococcus marinus (strain MIT 9312)).